The sequence spans 327 residues: Petrobactin synthase (327 aa).

It carries out the reaction N(8)-citryl-spermidine + 3,4-dihydroxybenzoyl-[aryl-carrier protein] = N(1)-(3,4-dihydroxybenzoyl)-N(8)-citryl-spermidine + holo-[aryl-carrier protein] + H(+). The enzyme catalyses N(8),N'(8)-citryl-bis(spermidine) + 3,4-dihydroxybenzoyl-[aryl-carrier protein] = N(1)-(3,4-dihydroxybenzoyl)-N(8),N'(8)-citryl-bis(spermidine) + holo-[aryl-carrier protein] + H(+). It catalyses the reaction N(1)-(3,4-dihydroxybenzoyl)-N(8),N'(8)-citryl-bis(spermidine) + 3,4-dihydroxybenzoyl-[aryl-carrier protein] = petrobactin + holo-[aryl-carrier protein] + H(+). It participates in siderophore biosynthesis; petrobactin biosynthesis. Its function is as follows. Involved in the biosynthesis of petrobactin, a catecholate siderophore that functions in both iron acquisition and virulence. Transfers the activated 3,4-dihydroxybenzoate (3,4-DHBA) moiety from 3,4-DHBA-loaded AsbD to different receipient molecules, including N-citryl-spermidine, N8,N'8-citryl-bis(spermidine) and N1-(3,4-dihydroxybenzoyl)-N8,N'8-citryl-bis(spermidine). Also catalyzes the transfer of the activated 3,4-DHBA moiety from 3,4-DHBA-loaded AsbD to spermidine to generate DHB-spermidine (DHB-SP). The chain is Petrobactin synthase from Bacillus anthracis.